The sequence spans 910 residues: Valine--tRNA ligase (910 aa).

Positions Pro46 to His56 match the 'HIGH' region motif. The 'KMSKS' region motif lies at Lys539 to Ser543. Lys542 provides a ligand contact to ATP. Residues Asp845–Leu909 are a coiled coil.

The protein belongs to the class-I aminoacyl-tRNA synthetase family. ValS type 1 subfamily. Monomer.

It is found in the cytoplasm. The catalysed reaction is tRNA(Val) + L-valine + ATP = L-valyl-tRNA(Val) + AMP + diphosphate. Functionally, catalyzes the attachment of valine to tRNA(Val). As ValRS can inadvertently accommodate and process structurally similar amino acids such as threonine, to avoid such errors, it has a 'posttransfer' editing activity that hydrolyzes mischarged Thr-tRNA(Val) in a tRNA-dependent manner. This chain is Valine--tRNA ligase, found in Synechocystis sp. (strain ATCC 27184 / PCC 6803 / Kazusa).